The chain runs to 117 residues: Non-specific lipid-transfer protein 1 (117 aa).

The N-terminal stretch at 1–26 (MAYSAMTKLALVVALCMVVSVPIAQA) is a signal peptide. 4 disulfides stabilise this stretch: Cys29–Cys76, Cys39–Cys53, Cys54–Cys99, and Cys74–Cys113.

The protein belongs to the plant LTP family.

Functionally, plant non-specific lipid-transfer proteins transfer phospholipids as well as galactolipids across membranes. May play a role in wax or cutin deposition in the cell walls of expanding epidermal cells and certain secretory tissues. The sequence is that of Non-specific lipid-transfer protein 1 from Prunus dulcis (Almond).